Here is a 240-residue protein sequence, read N- to C-terminus: Serine protease SplB (240 aa).

The signal sequence occupies residues 1 to 36 (MNKNVVIKSLATLTILTSVTGIGTTLVEEVQQTAKA). Residues His-75, Asp-113, and Ser-193 each act as charge relay system in the active site.

Belongs to the peptidase S1B family.

It localises to the secreted. Serine protease that cleaves specifically after the sequence Trp-Glu-Leu-Gln. The protein is Serine protease SplB (splB) of Staphylococcus aureus (strain Mu3 / ATCC 700698).